The following is a 151-amino-acid chain: Large ribosomal subunit protein bL9 (151 aa).

The protein belongs to the bacterial ribosomal protein bL9 family.

Binds to the 23S rRNA. This Pelodictyon phaeoclathratiforme (strain DSM 5477 / BU-1) protein is Large ribosomal subunit protein bL9.